Here is a 200-residue protein sequence, read N- to C-terminus: MTMVIGLTGGIGSGKTTVANLFGDYGIDIIDADIIAREVVEPNTTGLNAIVDKLGADILLTDGTLDRSKLRNAIFNQQQLKDWLNGLLHPLIREKMLSNISKATSPYCLLVVPLMVENNLQTMTHRLLVVDVDESVQIDRTQARDNVAPEHVKKILMAQASRQNRNAAADDIISNNGNSAELKNKVAELHQKYIKMSHLY.

The DPCK domain maps to 4–200 (VIGLTGGIGS…QKYIKMSHLY (197 aa)). 12 to 17 (GSGKTT) lines the ATP pocket.

Belongs to the CoaE family.

It is found in the cytoplasm. The catalysed reaction is 3'-dephospho-CoA + ATP = ADP + CoA + H(+). It functions in the pathway cofactor biosynthesis; coenzyme A biosynthesis; CoA from (R)-pantothenate: step 5/5. Functionally, catalyzes the phosphorylation of the 3'-hydroxyl group of dephosphocoenzyme A to form coenzyme A. This is Dephospho-CoA kinase from Photobacterium profundum (strain SS9).